A 337-amino-acid chain; its full sequence is UDP-N-acetylenolpyruvoylglucosamine reductase (337 aa).

An FAD-binding PCMH-type domain is found at 16 to 187 (ALPGRAARYQ…TSVIFRLAKA (172 aa)). R160 is an active-site residue. The Proton donor role is filled by S237. Residue E333 is part of the active site.

Requires FAD as cofactor.

The protein localises to the cytoplasm. It carries out the reaction UDP-N-acetyl-alpha-D-muramate + NADP(+) = UDP-N-acetyl-3-O-(1-carboxyvinyl)-alpha-D-glucosamine + NADPH + H(+). It functions in the pathway cell wall biogenesis; peptidoglycan biosynthesis. Its function is as follows. Cell wall formation. In Dechloromonas aromatica (strain RCB), this protein is UDP-N-acetylenolpyruvoylglucosamine reductase.